The chain runs to 200 residues: Non-specific lipid transfer protein GPI-anchored 16 (200 aa).

A signal peptide spans 1 to 20 (MEGLTLIVVMMSSFMLGGQG). Intrachain disulfides connect Cys-27–Cys-72, Cys-38–Cys-56, Cys-57–Cys-98, and Cys-70–Cys-107. N-linked (GlcNAc...) asparagine glycosylation occurs at Asn-87. The disordered stretch occupies residues 134-182 (SPGASKAAGTTPTQAPAPDTPADGPTGPTTKSGIRPVDQPMQPTGLAQS). A compositionally biased stretch (low complexity) spans 140 to 163 (AAGTTPTQAPAPDTPADGPTGPTT). Thr-177 carries GPI-anchor amidated threonine lipidation. Positions 178–200 (GLAQSSTSPFLPLLFISLILLNL) are cleaved as a propeptide — removed in mature form.

The protein belongs to the plant LTP family. In terms of tissue distribution, expressed in seedlings, preferentially in hypocotyls and roots. Also observed in siliques.

Its subcellular location is the cell membrane. Essential protein involved in female gametophyte development. Probable lipid transfer protein. This chain is Non-specific lipid transfer protein GPI-anchored 16, found in Arabidopsis thaliana (Mouse-ear cress).